A 204-amino-acid chain; its full sequence is Nascent polypeptide-associated complex subunit alpha (204 aa).

Over residues 1 to 19 (MADPRVEELPDEEVPKTNV) the composition is skewed to basic and acidic residues. Disordered stretches follow at residues 1-48 (MADP…HSRN) and 119-167 (LAAA…GLEA). The span at 22 to 32 (AGSDSESEAGE) shows a compositional bias: acidic residues. The 66-residue stretch at 46-111 (SRNEKKARKA…AKIEDLNSQA (66 aa)) folds into the NAC-A/B domain. Low complexity predominate over residues 119–128 (LAAAEAAAGE). Over residues 129 to 151 (HAGHDHDHDHGKGKAPETEAKKE) the composition is skewed to basic and acidic residues. Over residues 152-164 (EEEDDGEEVDETG) the composition is skewed to acidic residues. The UBA domain maps to 165–204 (LEAKDIELVMAQANVSRKKAVKALRENDNDIVNSIMALSI).

The protein belongs to the NAC-alpha family. As to quaternary structure, part of the nascent polypeptide-associated complex (NAC), consisting of egd2 and egd1. NAC associates with ribosomes via egd1.

It is found in the cytoplasm. The protein resides in the nucleus. Component of the nascent polypeptide-associated complex (NAC), a dynamic component of the ribosomal exit tunnel, protecting the emerging polypeptides from interaction with other cytoplasmic proteins to ensure appropriate nascent protein targeting. The NAC complex also promotes mitochondrial protein import by enhancing productive ribosome interactions with the outer mitochondrial membrane and blocks the inappropriate interaction of ribosomes translating non-secretory nascent polypeptides with translocation sites in the membrane of the endoplasmic reticulum. Egd2 may also be involved in transcription regulation. The polypeptide is Nascent polypeptide-associated complex subunit alpha (egd2) (Aspergillus clavatus (strain ATCC 1007 / CBS 513.65 / DSM 816 / NCTC 3887 / NRRL 1 / QM 1276 / 107)).